The chain runs to 134 residues: Profilin-2 (134 aa).

Cys13 and Cys118 are disulfide-bonded. An Involved in PIP2 interaction motif is present at residues 84-100 (AVIRGKKGSGGITIKKT). Thr114 is subject to Phosphothreonine.

It belongs to the profilin family. Occurs in many kinds of cells as a complex with monomeric actin in a 1:1 ratio. Post-translationally, phosphorylated by MAP kinases.

It localises to the cytoplasm. The protein localises to the cytoskeleton. In terms of biological role, binds to actin and affects the structure of the cytoskeleton. At high concentrations, profilin prevents the polymerization of actin, whereas it enhances it at low concentrations. In Olea europaea (Common olive), this protein is Profilin-2.